The sequence spans 226 residues: MTILVVTGTGTGVGKTVVCAALASAARQAGIDVAVCKPVQTGTARGDDDLAEVGRLAGVTQLAGLARYPQPMAPAAAAEHAGMALPARDQIVRLIADLDRPGRLTLVEGAGGLLVELAEPGVTLRDVAVDVAAAALVVVTADLGTLNHTKLTLEALAAQQVSCAGLVIGSWPDPPGLVAASNRSALARIAMVRAALPAGAASLDAGDFAAMSAAAFDRNWVAGLVG.

12–17 (GVGKTV) serves as a coordination point for ATP. Thr16 is a Mg(2+) binding site. Lys37 is an active-site residue. Thr41 serves as a coordination point for substrate. ATP is bound by residues Asp49, 108–111 (EGAG), 169–170 (GS), and 197–199 (PAG). Positions 49 and 108 each coordinate Mg(2+).

Belongs to the dethiobiotin synthetase family. In terms of assembly, homodimer. The cofactor is Mg(2+).

The protein resides in the cytoplasm. The enzyme catalyses (7R,8S)-7,8-diammoniononanoate + CO2 + ATP = (4R,5S)-dethiobiotin + ADP + phosphate + 3 H(+). Its pathway is cofactor biosynthesis; biotin biosynthesis; biotin from 7,8-diaminononanoate: step 1/2. In terms of biological role, catalyzes a mechanistically unusual reaction, the ATP-dependent insertion of CO2 between the N7 and N8 nitrogen atoms of 7,8-diaminopelargonic acid (DAPA, also called 7,8-diammoniononanoate) to form a ureido ring. This Mycobacterium tuberculosis (strain ATCC 25177 / H37Ra) protein is ATP-dependent dethiobiotin synthetase BioD.